The sequence spans 1068 residues: Phosphatidylinositol 4,5-bisphosphate 3-kinase catalytic subunit alpha isoform (1068 aa).

A PI3K-ABD domain is found at 16–105; it reads MPPRILVECL…QPFLKVIEPV (90 aa). One can recognise a PI3K-RBD domain in the interval 187-289; the sequence is KGQIIVVIWV…GRMPNLMLMA (103 aa). The region spanning 330–487 is the C2 PI3K-type domain; the sequence is INSALRIKIL…DWFSSVVKFP (158 aa). Residues 517–694 form the PIK helical domain; it reads LARDNELREN…GLLLESYCRA (178 aa). In terms of domain architecture, PI3K/PI4K catalytic spans 765-1051; it reads RLEECRIMSS…QMNDAHHGGW (287 aa). The G-loop stretch occupies residues 771–777; the sequence is IMSSAKR. The tract at residues 912-920 is catalytic loop; the sequence is GIGDRHNSN. Residues 931–957 are activation loop; the sequence is HIDFGHFLDHKKKKFGYKRERVPFVLT.

Belongs to the PI3/PI4-kinase family. Heterodimer of a catalytic subunit PIK3CA and a p85 regulatory subunit (PIK3R1, PIK3R2 or PIK3R3). Interacts with IRS1 in nuclear extracts. Interacts with RUFY3. Interacts with RASD2. Interacts with APPL1. Interacts with HRAS and KRAS. Interaction with HRAS/KRAS is required for PI3K pathway signaling and cell proliferation stimulated by EGF and FGF2. Interacts with FAM83B; activates the PI3K/AKT signaling cascade.

It catalyses the reaction a 1,2-diacyl-sn-glycero-3-phospho-(1D-myo-inositol-4,5-bisphosphate) + ATP = a 1,2-diacyl-sn-glycero-3-phospho-(1D-myo-inositol-3,4,5-trisphosphate) + ADP + H(+). The enzyme catalyses a 1,2-diacyl-sn-glycero-3-phospho-(1D-myo-inositol) + ATP = a 1,2-diacyl-sn-glycero-3-phospho-(1D-myo-inositol-3-phosphate) + ADP + H(+). The catalysed reaction is L-seryl-[protein] + ATP = O-phospho-L-seryl-[protein] + ADP + H(+). It carries out the reaction 1,2-dioctanoyl-sn-glycero-3-phospho-(1D-myo-inositol-4,5-bisphosphate) + ATP = 1,2-dioctanoyl-sn-glycero-3-phospho-(1D-myo-inositol-3,4,5-trisphosphate) + ADP + H(+). It catalyses the reaction 1-octadecanoyl-2-(5Z,8Z,11Z,14Z)-eicosatetraenoyl-sn-glycero-3-phospho-1D-myo-inositol 4,5-bisphosphate + ATP = 1-octadecanoyl-2-(5Z,8Z,11Z,14Z-eicosatetraenoyl)-sn-glycero-3-phospho-(1D-myo-inositol 3,4,5-triphosphate) + ADP + H(+). It participates in phospholipid metabolism; phosphatidylinositol phosphate biosynthesis. Functionally, phosphoinositide-3-kinase (PI3K) phosphorylates phosphatidylinositol (PI) and its phosphorylated derivatives at position 3 of the inositol ring to produce 3-phosphoinositides. Uses ATP and PtdIns(4,5)P2 (phosphatidylinositol 4,5-bisphosphate) to generate phosphatidylinositol 3,4,5-trisphosphate (PIP3). PIP3 plays a key role by recruiting PH domain-containing proteins to the membrane, including AKT1 and PDPK1, activating signaling cascades involved in cell growth, survival, proliferation, motility and morphology. Participates in cellular signaling in response to various growth factors. Involved in the activation of AKT1 upon stimulation by receptor tyrosine kinases ligands such as EGF, insulin, IGF1, VEGFA and PDGF. Involved in signaling via insulin-receptor substrate (IRS) proteins. Essential in endothelial cell migration during vascular development through VEGFA signaling, possibly by regulating RhoA activity. Required for lymphatic vasculature development, possibly by binding to RAS and by activation by EGF and FGF2, but not by PDGF. Regulates invadopodia formation through the PDPK1-AKT1 pathway. Participates in cardiomyogenesis in embryonic stem cells through a AKT1 pathway. Participates in vasculogenesis in embryonic stem cells through PDK1 and protein kinase C pathway. In addition to its lipid kinase activity, it displays a serine-protein kinase activity that results in the autophosphorylation of the p85alpha regulatory subunit as well as phosphorylation of other proteins such as 4EBP1, H-Ras, the IL-3 beta c receptor and possibly others. Plays a role in the positive regulation of phagocytosis and pinocytosis. This is Phosphatidylinositol 4,5-bisphosphate 3-kinase catalytic subunit alpha isoform (PIK3CA) from Homo sapiens (Human).